We begin with the raw amino-acid sequence, 492 residues long: Ketol-acid reductoisomerase (NADP(+)) (492 aa).

One can recognise a KARI N-terminal Rossmann domain in the interval 15–208 (AQLGKCRFMA…GGHRAGVLEF (194 aa)). NADP(+)-binding positions include 45-48 (CGAQ), R68, R76, S78, and 108-110 (DKQ). The active site involves H132. G158 is an NADP(+) binding site. KARI C-terminal knotted domains lie at 209-344 (SFVA…NAPQ) and 345-485 (FEGK…MTDM). The Mg(2+) site is built by D217, E221, E389, and E393. S414 provides a ligand contact to substrate.

The protein belongs to the ketol-acid reductoisomerase family. The cofactor is Mg(2+).

The enzyme catalyses (2R)-2,3-dihydroxy-3-methylbutanoate + NADP(+) = (2S)-2-acetolactate + NADPH + H(+). The catalysed reaction is (2R,3R)-2,3-dihydroxy-3-methylpentanoate + NADP(+) = (S)-2-ethyl-2-hydroxy-3-oxobutanoate + NADPH + H(+). The protein operates within amino-acid biosynthesis; L-isoleucine biosynthesis; L-isoleucine from 2-oxobutanoate: step 2/4. Its pathway is amino-acid biosynthesis; L-valine biosynthesis; L-valine from pyruvate: step 2/4. In terms of biological role, involved in the biosynthesis of branched-chain amino acids (BCAA). Catalyzes an alkyl-migration followed by a ketol-acid reduction of (S)-2-acetolactate (S2AL) to yield (R)-2,3-dihydroxy-isovalerate. In the isomerase reaction, S2AL is rearranged via a Mg-dependent methyl migration to produce 3-hydroxy-3-methyl-2-ketobutyrate (HMKB). In the reductase reaction, this 2-ketoacid undergoes a metal-dependent reduction by NADPH to yield (R)-2,3-dihydroxy-isovalerate. The protein is Ketol-acid reductoisomerase (NADP(+)) of Yersinia pestis bv. Antiqua (strain Antiqua).